A 469-amino-acid polypeptide reads, in one-letter code: NADH-quinone oxidoreductase subunit N (469 aa).

14 helical membrane passes run 6 to 26 (IWII…LLLG), 37 to 57 (VGVA…PAAL), 61 to 81 (LGVA…LTAA), 96 to 116 (ISGE…AVVS), 121 to 141 (LLIL…LVAI), 156 to 176 (LLLG…LYAA), 197 to 217 (PIAL…ISLV), 234 to 254 (VVAF…LLLL), 263 to 283 (LHTP…LAAL), 291 to 311 (MLAY…LTGS), 315 to 335 (FAAV…AFGA), 362 to 382 (AGIL…AGFI), 397 to 419 (IPLA…RVVV), and 441 to 461 (IALS…SPLL).

The protein belongs to the complex I subunit 2 family. NDH-1 is composed of 14 different subunits. Subunits NuoA, H, J, K, L, M, N constitute the membrane sector of the complex.

Its subcellular location is the cell inner membrane. It carries out the reaction a quinone + NADH + 5 H(+)(in) = a quinol + NAD(+) + 4 H(+)(out). Its function is as follows. NDH-1 shuttles electrons from NADH, via FMN and iron-sulfur (Fe-S) centers, to quinones in the respiratory chain. The immediate electron acceptor for the enzyme in this species is believed to be ubiquinone. Couples the redox reaction to proton translocation (for every two electrons transferred, four hydrogen ions are translocated across the cytoplasmic membrane), and thus conserves the redox energy in a proton gradient. This chain is NADH-quinone oxidoreductase subunit N, found in Geotalea uraniireducens (strain Rf4) (Geobacter uraniireducens).